A 122-amino-acid polypeptide reads, in one-letter code: Large ribosomal subunit protein uL18 (122 aa).

The protein belongs to the universal ribosomal protein uL18 family. As to quaternary structure, part of the 50S ribosomal subunit; part of the 5S rRNA/L5/L18/L25 subcomplex. Contacts the 5S and 23S rRNAs.

Functionally, this is one of the proteins that bind and probably mediate the attachment of the 5S RNA into the large ribosomal subunit, where it forms part of the central protuberance. The polypeptide is Large ribosomal subunit protein uL18 (Geotalea uraniireducens (strain Rf4) (Geobacter uraniireducens)).